The primary structure comprises 97 residues: Large ribosomal subunit protein bL27 (97 aa).

Residues 1 to 12 constitute a propeptide that is removed on maturation; it reads MLNLNLANLQFM. Residues 15–37 form a disordered region; sequence KKGGGSTSNGRDSQAKRLGAKAA.

This sequence belongs to the bacterial ribosomal protein bL27 family. In terms of processing, the N-terminus is cleaved by ribosomal processing cysteine protease Prp.

The chain is Large ribosomal subunit protein bL27 from Streptococcus suis (strain 98HAH33).